A 107-amino-acid chain; its full sequence is Early E3A 12.5 kDa protein (107 aa).

It belongs to the adenoviridae E3A-2 family.

Its function is as follows. Not yet known. The sequence is that of Early E3A 12.5 kDa protein from Human adenovirus C serotype 5 (HAdV-5).